Reading from the N-terminus, the 434-residue chain is Serine hydroxymethyltransferase (434 aa).

(6S)-5,6,7,8-tetrahydrofolate-binding positions include Leu133 and 137–139 (GHL). An N6-(pyridoxal phosphate)lysine modification is found at Lys242. A (6S)-5,6,7,8-tetrahydrofolate-binding site is contributed by 366 to 368 (SPF).

The protein belongs to the SHMT family. As to quaternary structure, homodimer. It depends on pyridoxal 5'-phosphate as a cofactor.

The protein resides in the cytoplasm. The catalysed reaction is (6R)-5,10-methylene-5,6,7,8-tetrahydrofolate + glycine + H2O = (6S)-5,6,7,8-tetrahydrofolate + L-serine. Its pathway is one-carbon metabolism; tetrahydrofolate interconversion. The protein operates within amino-acid biosynthesis; glycine biosynthesis; glycine from L-serine: step 1/1. Functionally, catalyzes the reversible interconversion of serine and glycine with tetrahydrofolate (THF) serving as the one-carbon carrier. This reaction serves as the major source of one-carbon groups required for the biosynthesis of purines, thymidylate, methionine, and other important biomolecules. Also exhibits THF-independent aldolase activity toward beta-hydroxyamino acids, producing glycine and aldehydes, via a retro-aldol mechanism. This Erythrobacter litoralis (strain HTCC2594) protein is Serine hydroxymethyltransferase.